Consider the following 317-residue polypeptide: MMDIMTDHENPAVTGEDNALPTRSGFVALIGPTNAGKSTLVNRLVGAKVSIVSHKVQTTRAVMRGIAIHKNAQIVFMDTPGIFKPRRRLDRAMVTSAWGGAKDADLILLLIDSERGLKGDAEAILEGLKDVPQKKILCLNKIDQVKREDLLKLAAAANEKVAFDRTFMISATNGSGCEDLMDYLVETLPEGPWYYPEDQISDLPMRQLAAEITREKLFLRLHQELPYASHVETEKWEERKDGSVRIEQVIYVERDSQKKIALGKNGDAIKAISTASRKELSEILEQPVHLFLFVKVRENWGDDPERFREMGLEFPRG.

An Era-type G domain is found at 23–190; the sequence is RSGFVALIGP…MDYLVETLPE (168 aa). Residues 31–38 form a G1 region; sequence GPTNAGKS. Residue 31 to 38 participates in GTP binding; it reads GPTNAGKS. A G2 region spans residues 57 to 61; the sequence is QTTRA. Residues 78–81 form a G3 region; that stretch reads DTPG. GTP contacts are provided by residues 78 to 82 and 140 to 143; these read DTPGI and NKID. A G4 region spans residues 140 to 143; the sequence is NKID. The G5 stretch occupies residues 169–171; the sequence is ISA. In terms of domain architecture, KH type-2 spans 221-298; the sequence is LHQELPYASH…HLFLFVKVRE (78 aa).

Belongs to the TRAFAC class TrmE-Era-EngA-EngB-Septin-like GTPase superfamily. Era GTPase family. As to quaternary structure, monomer.

The protein localises to the cytoplasm. It localises to the cell inner membrane. In terms of biological role, an essential GTPase that binds both GDP and GTP, with rapid nucleotide exchange. Plays a role in 16S rRNA processing and 30S ribosomal subunit biogenesis and possibly also in cell cycle regulation and energy metabolism. This Agrobacterium fabrum (strain C58 / ATCC 33970) (Agrobacterium tumefaciens (strain C58)) protein is GTPase Era.